Consider the following 145-residue polypeptide: D-aminoacyl-tRNA deacylase (145 aa).

Residues 137–138 (GP) carry the Gly-cisPro motif, important for rejection of L-amino acids motif.

The protein belongs to the DTD family. In terms of assembly, homodimer.

It is found in the cytoplasm. It carries out the reaction glycyl-tRNA(Ala) + H2O = tRNA(Ala) + glycine + H(+). The catalysed reaction is a D-aminoacyl-tRNA + H2O = a tRNA + a D-alpha-amino acid + H(+). Functionally, an aminoacyl-tRNA editing enzyme that deacylates mischarged D-aminoacyl-tRNAs. Also deacylates mischarged glycyl-tRNA(Ala), protecting cells against glycine mischarging by AlaRS. Acts via tRNA-based rather than protein-based catalysis; rejects L-amino acids rather than detecting D-amino acids in the active site. By recycling D-aminoacyl-tRNA to D-amino acids and free tRNA molecules, this enzyme counteracts the toxicity associated with the formation of D-aminoacyl-tRNA entities in vivo and helps enforce protein L-homochirality. In Saccharophagus degradans (strain 2-40 / ATCC 43961 / DSM 17024), this protein is D-aminoacyl-tRNA deacylase.